Reading from the N-terminus, the 346-residue chain is KH domain-containing, RNA-binding, signal transduction-associated protein 3 (346 aa).

An involved in homodimerization region spans residues 1 to 160; sequence MEEKYLPELM…IKKFLIPDYN (160 aa). Lysine 4 participates in a covalent cross-link: Glycyl lysine isopeptide (Lys-Gly) (interchain with G-Cter in SUMO2). The region spanning 61 to 127 is the KH domain; that stretch reads LIPVKQFPKF…AKYFHLNDDL (67 aa). Disordered stretches follow at residues 212–266 and 317–346; these read RPVA…QETY and GQEEWTNSRHKAPSARTAKGVYRDQPYGRY. A compositionally biased stretch (pro residues) spans 253 to 262; it reads GYRPPPPPPT.

It belongs to the KHDRBS family. Self-associates to form homooligomers; dimerization increases RNA affinity. Interacts with KHDRBS2/SLM-1. Interacts with KHDRBS1/SAM68; heterooligomer formation of KHDRBS family proteins may modulate RNA substrate specificity. Interacts with the splicing regulatory proteins SFRS9, SAFB and YTHDC1. Interacts with HNRPL, RBMX, p85 subunit of PI3-kinase, SERPINB5. Post-translationally, phosphorylated on tyrosine residues by PTK6. In terms of tissue distribution, highly expressed in testis and brain. In adult cerebellum expressed predominantly in internal granular layer interneurons and in hippocampus is exclusively expressed in CA neurons; expression is restricted to neuronal subpopulations largely non-overlapping with expression of KHDRBS2/SLM-1.

It is found in the nucleus. In terms of biological role, RNA-binding protein that plays a role in the regulation of alternative splicing and influences mRNA splice site selection and exon inclusion. Binds preferentially to the 5'-[AU]UAAA-3' motif in vitro. Binds optimally to RNA containing 5'-[AU]UAA-3' as a bipartite motif spaced by more than 15 nucleotides. Binds poly(A). RNA-binding abilities are down-regulated by tyrosine kinase PTK6. Involved in splice site selection of vascular endothelial growth factor. In vitro regulates CD44 alternative splicing by direct binding to purine-rich exonic enhancer. Can regulate alternative splicing of neurexins NRXN1-3 in the laminin G-like domain 6 containing the evolutionary conserved neurexin alternative spliced segment 4 (AS4) involved in neurexin selective targeting to postsynaptic partners such as neuroligins and LRRTM family members. High concentrations in forebrain structures block splicing inclusion of NRXN1-3 AS4 exons while low concentrations favor their inclusion. Targeted, cell-type specific splicing regulation of NRXN1 at AS4 is involved in neuronal glutamatergic synapse function and plasticity and is linked to behavioral aspects. Regulates expression of KHDRBS2/SLIM-1 in defined neuron populations in the hippocampus by modifying its alternative splicing resulting in a transcript predicted to undergo nonsense-mediated decay. Can bind FABP9 mRNA. May play a role as a negative regulator of cell growth. Inhibits cell proliferation. The protein is KH domain-containing, RNA-binding, signal transduction-associated protein 3 (Khdrbs3) of Mus musculus (Mouse).